Here is a 182-residue protein sequence, read N- to C-terminus: Isopentenyl-diphosphate Delta-isomerase (182 aa).

Mn(2+) contacts are provided by His-25 and His-32. A Nudix hydrolase domain is found at 30-164 (RLHLAFSSWL…PWAFSPWMVM (135 aa)). Residue Cys-67 is part of the active site. Cys-67 provides a ligand contact to Mg(2+). His-69 provides a ligand contact to Mn(2+). Glu-87 is a Mg(2+) binding site. Mn(2+) contacts are provided by Glu-114 and Glu-116. Glu-116 is an active-site residue.

This sequence belongs to the IPP isomerase type 1 family. Homodimer. It depends on Mg(2+) as a cofactor. The cofactor is Mn(2+).

It is found in the cytoplasm. The catalysed reaction is isopentenyl diphosphate = dimethylallyl diphosphate. It participates in isoprenoid biosynthesis; dimethylallyl diphosphate biosynthesis; dimethylallyl diphosphate from isopentenyl diphosphate: step 1/1. In terms of biological role, catalyzes the 1,3-allylic rearrangement of the homoallylic substrate isopentenyl (IPP) to its highly electrophilic allylic isomer, dimethylallyl diphosphate (DMAPP). This is Isopentenyl-diphosphate Delta-isomerase from Shigella dysenteriae serotype 1 (strain Sd197).